Consider the following 302-residue polypeptide: Meiotic recombination protein rec14 (302 aa).

7 WD repeats span residues 14-51 (AHQA…HSLV), 57-96 (PHKL…FRDL), 101-140 (QHPS…KISE), 142-184 (DTKG…HVLS), 185-226 (GHTS…GQLR), 227-266 (GHAA…CIST), and 269-302 (ETDG…AATE).

In terms of assembly, component of the DSB catalytic core (DSBC) complex, composed of at least rec12, rec6 and rec14. The complex interacts with mde2.

Required for formation of the rec12-mediated double-strand breaks (DSBs) that initiate meiotic recombination. The chain is Meiotic recombination protein rec14 from Schizosaccharomyces pombe (strain 972 / ATCC 24843) (Fission yeast).